A 535-amino-acid polypeptide reads, in one-letter code: ATP-dependent RNA helicase DBP3 (535 aa).

Over residues M1–K21 the composition is skewed to basic and acidic residues. The interval M1–S82 is disordered. Positions S22 to K33 are enriched in basic residues. Residues D34 to T72 show a composition bias toward basic and acidic residues. The short motif at L125–A151 is the Q motif element. A Helicase ATP-binding domain is found at W154–V327. A167–T174 contributes to the ATP binding site. The DEAD box motif lies at D274 to D277. The Helicase C-terminal domain maps to K352 to G505.

This sequence belongs to the DEAD box helicase family. DDX5/DBP2 subfamily.

Its subcellular location is the nucleus. It is found in the nucleolus. It catalyses the reaction ATP + H2O = ADP + phosphate + H(+). ATP-dependent RNA helicase required for 60S ribosomal subunit synthesis. Involved in efficient pre-rRNA processing, predominantly at site A3, which is necessary for the normal formation of 25S and 5.8S rRNAs. This chain is ATP-dependent RNA helicase DBP3 (DBP3), found in Eremothecium gossypii (strain ATCC 10895 / CBS 109.51 / FGSC 9923 / NRRL Y-1056) (Yeast).